Reading from the N-terminus, the 459-residue chain is Vasoactive intestinal polypeptide receptor 1 (459 aa).

Positions 1–30 (MRPPSPPHVRWLCVLAGALACALRPAGSQA) are cleaved as a signal peptide. At 31–142 (ASPQHECEYL…EQQQTKFYNT (112 aa)) the chain is on the extracellular side. 5 disulfides stabilise this stretch: Cys37–Cys209, Cys50–Cys72, Cys63–Cys105, Cys86–Cys122, and Cys216–Cys286. Asn58, Asn69, and Asn100 each carry an N-linked (GlcNAc...) asparagine glycan. Residues 143–167 (VKTGYTIGYSLSLASLLVAMAILSL) form a helical membrane-spanning segment. The Cytoplasmic segment spans residues 168-175 (FRKLHCTR). A helical transmembrane segment spans residues 176-197 (NYIHMHLFMSFILRATAVFIKD). At 198–217 (MALFNSGEIDHCSEASVGCK) the chain is on the extracellular side. A helical membrane pass occupies residues 218 to 242 (AAVVFFQYCVMANFFWLLVEGLYLY). The Cytoplasmic segment spans residues 243 to 255 (TLLAVSFFSERKY). The chain crosses the membrane as a helical span at residues 256–277 (FWGYILIGWGVPSVFITIWTVV). At 278 to 293 (RIYFEDFGCWDTIINS) the chain is on the extracellular side. An N-linked (GlcNAc...) asparagine glycan is attached at Asn292. The chain crosses the membrane as a helical span at residues 294 to 318 (SLWWIIKAPILLSILVNFVLFICII). At 319 to 340 (RILVQKLRPPDIGKNDSSPYSR) the chain is on the cytoplasmic side. A helical membrane pass occupies residues 341–361 (LAKSTLLLIPLFGIHYVMFAF). The Extracellular portion of the chain corresponds to 362–369 (FPDNFKAQ). A helical membrane pass occupies residues 370–393 (VKMVFELVVGSFQGFVVAILYCFL). Topologically, residues 394–459 (NGEVQAELRR…SSFQAEVSLV (66 aa)) are cytoplasmic.

The protein belongs to the G-protein coupled receptor 2 family. Interacts with ADCYAP1/PACAP; activated by both PACAP27 and PACAP38 neuropeptides. Interacts with VIP; the interaction results in VIPR1 activation. In liver, lung, intestines, thymus and brain (mostly in the cerebral cortex and hippocampus).

It localises to the cell membrane. Its function is as follows. G protein-coupled receptor activated by the neuropeptides vasoactive intestinal peptide (VIP) and pituitary adenylate cyclase-activating polypeptide (ADCYAP1/PACAP). Binds VIP and both PACAP27 and PACAP38 bioactive peptides with the following order of ligand affinity VIP = PACAP27 &gt; PACAP38. Ligand binding causes a conformation change that triggers signaling via guanine nucleotide-binding proteins (G proteins) and modulates the activity of downstream effectors. Activates cAMP-dependent pathway. The sequence is that of Vasoactive intestinal polypeptide receptor 1 from Rattus norvegicus (Rat).